Consider the following 156-residue polypeptide: Small ribosomal subunit protein uS7 (156 aa).

It belongs to the universal ribosomal protein uS7 family. In terms of assembly, part of the 30S ribosomal subunit. Contacts proteins S9 and S11.

In terms of biological role, one of the primary rRNA binding proteins, it binds directly to 16S rRNA where it nucleates assembly of the head domain of the 30S subunit. Is located at the subunit interface close to the decoding center, probably blocks exit of the E-site tRNA. The sequence is that of Small ribosomal subunit protein uS7 from Synechococcus sp. (strain CC9605).